A 660-amino-acid polypeptide reads, in one-letter code: Translation factor GUF1, mitochondrial (660 aa).

A mitochondrion-targeting transit peptide spans 1 to 42; it reads MRSCVRTASSVLQSWRAHTVLRNGCPLPSRTLERLPRLARSY. The region spanning 62 to 242 is the tr-type G domain; that stretch reads ERYRNFCIVA…AVVEKIPAPV (181 aa). GTP-binding positions include 71–78, 135–139, and 189–192; these read AHVDHGKS, DTPGH, and NKVD.

This sequence belongs to the TRAFAC class translation factor GTPase superfamily. Classic translation factor GTPase family. LepA subfamily.

Its subcellular location is the mitochondrion inner membrane. The catalysed reaction is GTP + H2O = GDP + phosphate + H(+). Promotes mitochondrial protein synthesis. May act as a fidelity factor of the translation reaction, by catalyzing a one-codon backward translocation of tRNAs on improperly translocated ribosomes. Binds to mitochondrial ribosomes in a GTP-dependent manner. The polypeptide is Translation factor GUF1, mitochondrial (Phaeosphaeria nodorum (strain SN15 / ATCC MYA-4574 / FGSC 10173) (Glume blotch fungus)).